The primary structure comprises 161 residues: Glutaredoxin-2, mitochondrial (161 aa).

A mitochondrion-targeting transit peptide spans 1–19 (MLWRRAALAGTRLVWSRSG). Phosphoserine is present on Ser-20. Positions 54–154 (VNQIQETISD…PLVHQCYLKK (101 aa)) constitute a Glutaredoxin domain. Residue Cys-65 participates in [2Fe-2S] cluster binding. Lys-71 is a binding site for glutathione. Cys-74 is modified (S-glutathionyl cysteine; alternate). The cysteines at positions 74 and 77 are disulfide-linked. The glutathione site is built by Gln-106 and Val-118. Residue Cys-150 coordinates [2Fe-2S] cluster.

It belongs to the glutaredoxin family. Monomer; active form. Homodimer; inactive form. The homodimer is probably linked by 1 2Fe-2S cluster.

The protein resides in the mitochondrion. Its activity is regulated as follows. The 2Fe-2S present in the homodimer leads to inactivation of the enzyme. The 2Fe-2S may serve as a redox sensor: the presence of one-electron oxidants or reductants leading to the loss of the 2Fe-2S cluster, subsequent monomerization and activation of the enzyme. Glutathione-dependent oxidoreductase that facilitates the maintenance of mitochondrial redox homeostasis upon induction of apoptosis by oxidative stress. Involved in response to hydrogen peroxide and regulation of apoptosis caused by oxidative stress. Acts as a very efficient catalyst of monothiol reactions because of its high affinity for protein glutathione-mixed disulfides. Can receive electrons not only from glutathione (GSH), but also from thioredoxin reductase supporting both monothiol and dithiol reactions. Efficiently catalyzes both glutathionylation and deglutathionylation of mitochondrial complex I, which in turn regulates the superoxide production by the complex. Overexpression decreases the susceptibility to apoptosis and prevents loss of cardiolipin and cytochrome c release. In Pongo abelii (Sumatran orangutan), this protein is Glutaredoxin-2, mitochondrial (GLRX2).